A 493-amino-acid chain; its full sequence is MTQESSSSNHYVDESSFDNNNNNNNNGGEGSSNEILIRIPFLHDSVPALYAMFALASLFVLLATILSAHLIYKHLKYYTQPDHQRYIVRIVFMIPIYAIYSLLSLLLHNYQVYFALLRDCYEAYVLYMFFALCVSYGGGDKNLVTHFTSHPVMRLPMPLFFKFKPNEAFLQVCRMGMLQYVLVRPAVTLASAIFEIFGLYDEGSYAINRFYFYNAFIINVSVTVALYIVVLFYQAAAEELAPYKPLLKFTSIKIVVFFCFWQSIAISGMTNFGWIPTLDGWNSGEVSTGLQNFLICFEMFGVAILHQYAFPYELYRVRAFSAAPLIHRVEMGTVFKSVINSVSQKDMVKETVKSFKGTKITDGKTGLYSGLKDEVFNEFDIEEIEMGDFTSANDNNNFDDFDFSENNINSNNKDNNSSIYNDGASKKNHIGSAILAGGGGGGKKDNDLITDDDFFSLMNNDYANIDFSNFDQDALEEMNFDDDDDDMAFTARR.

Residues 1–10 (MTQESSSSNH) show a composition bias toward polar residues. The tract at residues 1–25 (MTQESSSSNHYVDESSFDNNNNNNN) is disordered. Helical transmembrane passes span 46–66 (VPAL…ATIL), 87–107 (IVRI…SLLL), 119–139 (DCYE…YGGG), 180–200 (YVLV…FGLY), 212–232 (FYNA…VVLF), 254–274 (IVVF…NFGW), and 293–313 (FLIC…FPYE). N-linked (GlcNAc...) asparagine glycans are attached at residues Asn415 and Asn416.

This sequence belongs to the TMEM184 family.

The protein localises to the cell membrane. Functionally, probable transporter. This chain is Transmembrane protein 184 homolog DDB_G0284525 (tmem184A), found in Dictyostelium discoideum (Social amoeba).